The chain runs to 334 residues: Holliday junction branch migration complex subunit RuvB (334 aa).

The tract at residues 4–184 is large ATPase domain (RuvB-L); it reads EDRLISGTQK…FGIVQRLEYY (181 aa). ATP contacts are provided by residues Ile23, Arg24, Gly65, Lys68, Thr69, Thr70, 131 to 133, Arg174, Tyr184, and Arg221; that span reads EDY. Position 69 (Thr69) interacts with Mg(2+). Residues 185–255 are small ATPAse domain (RuvB-S); sequence DLKSLTRIVL…VAKLALDMLE (71 aa). Residues 258 to 334 form a head domain (RuvB-H) region; the sequence is NEGFDYMDRK…YLHFGFDKPQ (77 aa). Residues Arg313 and Arg318 each contribute to the DNA site.

It belongs to the RuvB family. As to quaternary structure, homohexamer. Forms an RuvA(8)-RuvB(12)-Holliday junction (HJ) complex. HJ DNA is sandwiched between 2 RuvA tetramers; dsDNA enters through RuvA and exits via RuvB. An RuvB hexamer assembles on each DNA strand where it exits the tetramer. Each RuvB hexamer is contacted by two RuvA subunits (via domain III) on 2 adjacent RuvB subunits; this complex drives branch migration. In the full resolvosome a probable DNA-RuvA(4)-RuvB(12)-RuvC(2) complex forms which resolves the HJ.

It is found in the cytoplasm. It carries out the reaction ATP + H2O = ADP + phosphate + H(+). Its function is as follows. The RuvA-RuvB-RuvC complex processes Holliday junction (HJ) DNA during genetic recombination and DNA repair, while the RuvA-RuvB complex plays an important role in the rescue of blocked DNA replication forks via replication fork reversal (RFR). RuvA specifically binds to HJ cruciform DNA, conferring on it an open structure. The RuvB hexamer acts as an ATP-dependent pump, pulling dsDNA into and through the RuvAB complex. RuvB forms 2 homohexamers on either side of HJ DNA bound by 1 or 2 RuvA tetramers; 4 subunits per hexamer contact DNA at a time. Coordinated motions by a converter formed by DNA-disengaged RuvB subunits stimulates ATP hydrolysis and nucleotide exchange. Immobilization of the converter enables RuvB to convert the ATP-contained energy into a lever motion, pulling 2 nucleotides of DNA out of the RuvA tetramer per ATP hydrolyzed, thus driving DNA branch migration. The RuvB motors rotate together with the DNA substrate, which together with the progressing nucleotide cycle form the mechanistic basis for DNA recombination by continuous HJ branch migration. Branch migration allows RuvC to scan DNA until it finds its consensus sequence, where it cleaves and resolves cruciform DNA. The chain is Holliday junction branch migration complex subunit RuvB from Psychromonas ingrahamii (strain DSM 17664 / CCUG 51855 / 37).